The chain runs to 82 residues: Cytochrome c-551 (82 aa).

C12, C15, H16, and M61 together coordinate heme c.

In terms of processing, binds 1 heme c group covalently per subunit.

Functionally, this is a prokaryotic monoheme cytochrome, unreactive with mitochondrial cytochrome C oxidase or reductase. It functions in nitrite and nitrate respiration in Pseudomonas, but it is also found in other bacteria. The protein is Cytochrome c-551 of Pseudomonas denitrificans.